A 278-amino-acid polypeptide reads, in one-letter code: Large ribosomal subunit protein uL2 (278 aa).

2 disordered regions span residues 1 to 20 and 225 to 278; these read MGIR…SVSD and VMNP…GKKR. Over residues 258–278 the composition is skewed to basic residues; it reads RNKKKASSRLIVRRRKSGKKR.

This sequence belongs to the universal ribosomal protein uL2 family. Part of the 50S ribosomal subunit. Forms a bridge to the 30S subunit in the 70S ribosome.

One of the primary rRNA binding proteins. Required for association of the 30S and 50S subunits to form the 70S ribosome, for tRNA binding and peptide bond formation. It has been suggested to have peptidyltransferase activity; this is somewhat controversial. Makes several contacts with the 16S rRNA in the 70S ribosome. The protein is Large ribosomal subunit protein uL2 of Cutibacterium acnes (strain DSM 16379 / KPA171202) (Propionibacterium acnes).